Reading from the N-terminus, the 915-residue chain is Protein translocase subunit SecA (915 aa).

Residues glutamine 87, 105 to 109, and aspartate 516 each bind ATP; that span reads GEGKT. A disordered region spans residues 854–915; it reads QKMQMRHEQL…KYKNCHGQLE (62 aa). 4 residues coordinate Zn(2+): cysteine 899, cysteine 901, cysteine 910, and histidine 911.

It belongs to the SecA family. As to quaternary structure, monomer and homodimer. Part of the essential Sec protein translocation apparatus which comprises SecA, SecYEG and auxiliary proteins SecDF-YajC and YidC. Zn(2+) is required as a cofactor.

Its subcellular location is the cell inner membrane. It localises to the cytoplasm. It carries out the reaction ATP + H2O + cellular proteinSide 1 = ADP + phosphate + cellular proteinSide 2.. In terms of biological role, part of the Sec protein translocase complex. Interacts with the SecYEG preprotein conducting channel. Has a central role in coupling the hydrolysis of ATP to the transfer of proteins into and across the cell membrane, serving both as a receptor for the preprotein-SecB complex and as an ATP-driven molecular motor driving the stepwise translocation of polypeptide chains across the membrane. The chain is Protein translocase subunit SecA from Cellvibrio japonicus (strain Ueda107) (Pseudomonas fluorescens subsp. cellulosa).